We begin with the raw amino-acid sequence, 194 residues long: MKIGIVTGIPGVGKSTVLAKVKEILDNQGINNKIINYGDFMLATALKLGYAKDRDEMRKLSVEKQKKLQIDAAKGIAEEARAGGEGYLFIDTHAVIRTPSGYLPGLPSYVITEINPSVIFLLEADPKIILSRQKRDTTRNRNDYSDESVILETINFARYAATASAVLAGSTVKVIVNVEGDPSIAANEIIRSMK.

8 to 16 lines the ATP pocket; the sequence is GIPGVGKST.

The protein belongs to the archaeal adenylate kinase family. As to quaternary structure, homotrimer.

The protein localises to the cytoplasm. The enzyme catalyses AMP + ATP = 2 ADP. This Sulfolobus acidocaldarius (strain ATCC 33909 / DSM 639 / JCM 8929 / NBRC 15157 / NCIMB 11770) protein is Adenylate kinase (adkA).